The chain runs to 506 residues: Zinc finger and SCAN domain containing protein 4D (506 aa).

The SCAN box domain occupies 37-119; it reads SAQLNFSPSN…RFMESLTDEC (83 aa). Residues 238–264 are disordered; it reads SQGNSSHHVDFRSAPTPADVPMEEQPK. C2H2-type zinc fingers lie at residues 395–417, 424–446, 452–474, and 480–503; these read FKCE…QRTH, LLCV…EIIH, FKCS…EMIH, and YVCS…RNYH.

Highly expressed at the 2-cell stage but its expression is rapidly turned off.

It localises to the nucleus. The protein resides in the chromosome. Its subcellular location is the telomere. Its function is as follows. Transcription factor required to regulate early development. Binds telomeres and plays a key role in genomic stability by regulating telomere elongation. Acts as an activator of spontaneous telomere sister chromatid exchange (T-SCE) and telomere elongation. The protein is Zinc finger and SCAN domain containing protein 4D (Zscan4d) of Mus musculus (Mouse).